A 493-amino-acid chain; its full sequence is Vacuolar-processing enzyme (493 aa).

The signal sequence occupies residues 1-34 (MAVHRSLLNKPTWCRVAFWWWMLVMVMRIQGTNG). Positions 35 to 53 (KEQDSVIKLPTQEVDAESD) are excised as a propeptide. His-176 is a catalytic residue. The active-site Nucleophile is the Cys-218. The cysteines at positions 251 and 265 are disulfide-linked. A glycan (N-linked (GlcNAc...) asparagine) is linked at Asn-318. 2 disulfide bridges follow: Cys-429–Cys-459 and Cys-441–Cys-476.

The protein belongs to the peptidase C13 family.

Functionally, asparagine-specific endopeptidase involved in the processing of vacuolar seed protein precursors into the mature forms. The sequence is that of Vacuolar-processing enzyme from Phaseolus vulgaris (Kidney bean).